The chain runs to 333 residues: Ribose-phosphate pyrophosphokinase (333 aa).

58–60 (DGE) contacts ATP. Residues histidine 151 and aspartate 190 each contribute to the Mg(2+) site. Lysine 214 is a catalytic residue. D-ribose 5-phosphate contacts are provided by residues arginine 216, aspartate 240, and 244–248 (DTAGT).

This sequence belongs to the ribose-phosphate pyrophosphokinase family. Class I subfamily. Homohexamer. It depends on Mg(2+) as a cofactor.

Its subcellular location is the cytoplasm. The catalysed reaction is D-ribose 5-phosphate + ATP = 5-phospho-alpha-D-ribose 1-diphosphate + AMP + H(+). The protein operates within metabolic intermediate biosynthesis; 5-phospho-alpha-D-ribose 1-diphosphate biosynthesis; 5-phospho-alpha-D-ribose 1-diphosphate from D-ribose 5-phosphate (route I): step 1/1. Its function is as follows. Involved in the biosynthesis of the central metabolite phospho-alpha-D-ribosyl-1-pyrophosphate (PRPP) via the transfer of pyrophosphoryl group from ATP to 1-hydroxyl of ribose-5-phosphate (Rib-5-P). This Synechocystis sp. (strain ATCC 27184 / PCC 6803 / Kazusa) protein is Ribose-phosphate pyrophosphokinase.